The following is a 200-amino-acid chain: Rho-related protein racD (200 aa).

Residues Ala20, Gly22, Lys23, Thr24, Cys25, Tyr39, and Thr42 each contribute to the GTP site. Position 24 (Thr24) interacts with Mg(2+). 2 consecutive short sequence motifs (switch) follow at residues 33–44 (NEFPKDYVPTVF) and 64–82 (DTAGQEDYEQLRPLSYPNT). Position 42 (Thr42) interacts with Mg(2+). GTP contacts are provided by Lys123, Asp125, and Ala166. The residue at position 197 (Cys197) is a Cysteine methyl ester. The S-geranylgeranyl cysteine moiety is linked to residue Cys197. The propeptide at 198–200 (ALL) is removed in mature form.

This sequence belongs to the small GTPase superfamily. Rho family. It depends on Mg(2+) as a cofactor.

It is found in the cell membrane. The protein resides in the cytoplasm. Its subcellular location is the cytoskeleton. It catalyses the reaction GTP + H2O = GDP + phosphate + H(+). With respect to regulation, regulated by guanine nucleotide exchange factors (GEFs) which promote the exchange of bound GDP for free GTP, GTPase activating proteins (GAPs) which increase the GTP hydrolysis activity, and GDP dissociation inhibitors which inhibit the dissociation of the nucleotide from the GTPase. Functionally, small GTPase which cycles between active GTP-bound and inactive GDP-bound states. This chain is Rho-related protein racD, found in Entamoeba histolytica (strain ATCC 30459 / HM-1:IMSS / ABRM).